The chain runs to 197 residues: ATP synthase protein MI25 (197 aa).

The chain crosses the membrane as a helical span at residues 30-50 (ISIYNEEMIVARCFIGFLIFS).

This sequence belongs to the ATPase protein MI25 family. In terms of assembly, F-type ATPases have 2 components, CF(1) - the catalytic core - and CF(0) - the membrane proton channel. CF(1) has five subunits: alpha(3), beta(3), gamma(1), delta(1), epsilon(1). CF(0) has three main subunits: a, b and c.

It is found in the mitochondrion membrane. In terms of biological role, this is one of the chains of the nonenzymatic component (CF(0) subunit) of the mitochondrial ATPase complex. In Oryza sativa subsp. indica (Rice), this protein is ATP synthase protein MI25.